The chain runs to 233 residues: B-cell lymphoma/leukemia 10 (233 aa).

The residue at position 1 (M1) is an N-acetylmethionine. The 89-residue stretch at 13–101 (LTEVKKDALE…QNFLIQKITD (89 aa)) folds into the CARD domain. Residues K17, K31, and K63 each participate in a glycyl lysine isopeptide (Lys-Gly) (interchain with G-Cter in ubiquitin) cross-link. Polar residues predominate over residues 130–141 (TNNLSRSNSDES). Disordered stretches follow at residues 130–149 (TNNL…KQRP) and 186–233 (SFSS…LSRQ). Position 138 is a phosphoserine (S138). A compositionally biased stretch (pro residues) spans 195–205 (PGDPGAPPLPP).

In terms of assembly, homomultimer; homooligomerized following recruitment by CARD domain-containing proteins that form a nucleating helical template that recruits BCL10 via CARD-CARD interaction. Self-associates by CARD-CARD interaction and interacts with other CARD-proteins such as CARD9, CARD10, CARD11 and CARD14. Forms a complex with CARD14 and MALT1; resulting in the formation of a CBM (CARD14-BCL10-MALT1) complex. Forms a complex with CARD11 and MALT1; resulting in the formation of a CBM (CARD11-BCL10-MALT1) complex. Forms a complex with CARD9 and MALT1; resulting in the formation of a CBM (CARD9-BCL10-MALT1) complex. Found in a membrane raft complex, at least composed of BCL10, CARD11, DPP4 and IKBKB. Binds caspase-9 with its C-terminal domain. Interacts with TRAF2 and BIRC2/c-IAP2. Interacts with PELI2 and SOCS3; these interactions may be mutually exclusive. In terms of processing, phosphorylated. Phosphorylation results in dissociation from TRAF2 and binding to BIRC2/c-IAP2. Phosphorylated by IKBKB/IKKB. Ubiquitinated via both 'Lys-63'-linked and linear ('Met-1'-linked) polyubiquitin chains in response to T-cell receptor (TCR) activation. Ubiquitination is recognized by IKBKG/NEMO, the regulatory subunit of I-kappa-B kinase (IKK), and is required for TCR-induced NF-kappa-B activation. Linear ubiquitination at Lys-17, Lys-31 and Lys-63 is mediated by RNF31/HOIP; linear ubiquitination is recognized with much higher affinity than 'Lys-63'-linked ubiquitin by IKBKG/NEMO. CARD11 is required for linear ubiquitination by HOIP by promoting the targeting of BCL10 to RNF31/HOIP. Post-translationally, proteolytically cleaved by MALT1; required for T-cell activation.

It is found in the cytoplasm. Its subcellular location is the perinuclear region. It localises to the membrane raft. Functionally, plays a key role in both adaptive and innate immune signaling by bridging CARD domain-containing proteins to immune activation. Acts by channeling adaptive and innate immune signaling downstream of CARD domain-containing proteins CARD9, CARD11 and CARD14 to activate NF-kappa-B and MAP kinase p38 (MAPK11, MAPK12, MAPK13 and/or MAPK14) pathways which stimulate expression of genes encoding pro-inflammatory cytokines and chemokines. Recruited by activated CARD domain-containing proteins: homooligomerized CARD domain-containing proteins form a nucleating helical template that recruits BCL10 via CARD-CARD interaction, thereby promoting polymerization of BCL10, subsequent recruitment of MALT1 and formation of a CBM complex. This leads to activation of NF-kappa-B and MAP kinase p38 (MAPK11, MAPK12, MAPK13 and/or MAPK14) pathways which stimulate expression of genes encoding pro-inflammatory cytokines and chemokines. Activated by CARD9 downstream of C-type lectin receptors; CARD9-mediated signals are essential for antifungal immunity. Activated by CARD11 downstream of T-cell receptor (TCR) and B-cell receptor (BCR). Promotes apoptosis, pro-caspase-9 maturation and activation of NF-kappa-B via NIK and IKK. The protein is B-cell lymphoma/leukemia 10 of Rattus norvegicus (Rat).